The following is a 781-amino-acid chain: MTPPPASPSKKAKSSWLLIALIAVIIGIILCAGVITFLTLFNKNGDGPDMDWQNATEVPLTTTSKATVSTTTTQSATTPSTTTTRIEETTTTTSGAFDESVKNSEASTSTIPTTEAVPTTTATDAPEIVMPVDVASILKDKTKDFEIVEKCAEIQALPVSCTPSQSPLTSDPSKFQPIHYVLNITIRDVRKPVLEGHMQLFASTKDQVQAISLHSVKIHNLENRDRIHVVNCNTGETICVSRVHQIDDLIHLELAQSISSGVNLRVDIDGFISADSGPHVFKQIPTAKWRVPQMIGSVFEPTSARHVFPSFDLHNQKSTFNLCLNHGPSMSAIANSLINPNVSTSGISCFEKTVPLIAQQLSFVAFEKTNPLFYNTTTMDGAYLPEIDMIFNLNAKNFKQYEWIHSEVSKVMALMSKWSGFSYPLTRLEIVVAPVQAGHSALGVITLPAQAIAYQKHTSTHETLIKEVIGQWMEGVVTTEHTCFEKALIAYVEWKINEELQIVKKTRKMEVSKIRPRNLNETADSVRVLRQIKSQSSNLCSPRFVEVFYTLDETYGQETVIGMIRVIFDKFAFSTATISDWASAAETATGGRPEAGALIHQWYRPSSTISRPVLRAVVSSNSVEFNQLTEETWTVPLEISGSAGTQLAVISEKKQAIPFVSSDYVVVDAGRKSHAFVVYDADTYLRLIRCFGDSRCPSKEIGGIFSDLGAALLANILPKPENQDVAKWKSVFKFMAQQNIVEGTAACCVEHAIREMRKCSYWDIQDVCTKIDFNIVLAAVA.

Positions 1–27 (MTPPPASPSKKAKSSWLLIALIAVIIG) are cleaved as a signal peptide. N-linked (GlcNAc...) asparagine glycosylation is present at asparagine 54. Over residues 63 to 94 (TSKATVSTTTTQSATTPSTTTTRIEETTTTTS) the composition is skewed to low complexity. The segment at 63 to 113 (TSKATVSTTTTQSATTPSTTTTRIEETTTTTSGAFDESVKNSEASTSTIPT) is disordered. Residues asparagine 183, asparagine 341, asparagine 375, and asparagine 520 are each glycosylated (N-linked (GlcNAc...) asparagine).

The polypeptide is Matrix non-peptidase homolog 1 (mnp-1) (Caenorhabditis elegans).